Here is a 306-residue protein sequence, read N- to C-terminus: Curved DNA-binding protein (306 aa).

Residues 5–69 (DYYAIMGVKP…QRRAEYDQMW (65 aa)) form the J domain.

The protein localises to the cytoplasm. Its subcellular location is the nucleoid. Its function is as follows. DNA-binding protein that preferentially recognizes a curved DNA sequence. It is probably a functional analog of DnaJ; displays overlapping activities with DnaJ, but functions under different conditions, probably acting as a molecular chaperone in an adaptive response to environmental stresses other than heat shock. Lacks autonomous chaperone activity; binds native substrates and targets them for recognition by DnaK. Its activity is inhibited by the binding of CbpM. This chain is Curved DNA-binding protein, found in Shigella flexneri.